The sequence spans 59 residues: Large ribosomal subunit protein uL30 (59 aa).

This sequence belongs to the universal ribosomal protein uL30 family. As to quaternary structure, part of the 50S ribosomal subunit.

The polypeptide is Large ribosomal subunit protein uL30 (Desulfatibacillum aliphaticivorans).